Reading from the N-terminus, the 1580-residue chain is Ras GTPase-activating protein raskol (1580 aa).

At Ser-164 the chain carries Phosphoserine. Residue Thr-167 is modified to Phosphothreonine. The disordered stretch occupies residues 197 to 223 (LKRTKSVTKLERTKRGSGGLRGSRSHE). Phosphoserine occurs at positions 221 and 224. A PH domain is found at 233 to 291 (STIDLSCTGAVGVAPVHQSVLGRRHCFQVRGGPRGERYYSCGSRQERDLWIYSLRKSIA). The 119-residue stretch at 282 to 400 (WIYSLRKSIA…TSRLPCEQWY (119 aa)) folds into the C2 domain. The 211-residue stretch at 490–700 (GLAGAFLTDV…ARMQQFLEII (211 aa)) folds into the Ras-GAP domain. Disordered stretches follow at residues 764–819 (GMGT…QPQH), 857–892 (LLQQQQQQQQQQQQQQQQHQQLQQHGHQQQPHHQHP), 904–1023 (AGNQ…SYDD), 1112–1218 (ANHH…QQFG), 1284–1313 (LSGGSSSSTSASASTSNLGKSGGSSAYGRL), 1334–1443 (VGYG…LGKS), and 1561–1580 (YETQQQQQQHQAPPKTQKPQ). Residues 776–805 (ATSSTHSIASENQENRNPGSSGSHAGSNSE) show a composition bias toward polar residues. Low complexity-rich tracts occupy residues 806–818 (QLLPQQSQLAQPQ), 857–885 (LLQQQQQQQQQQQQQQQQHQQLQQHGHQQ), and 926–939 (SSSLNGSSSNLLHG). Basic residues predominate over residues 940 to 954 (HQQHAHHPQQLHPHH). Residues 987 to 1020 (TSTPSSTRSRTLPRNGNPNANGNVGSSNNNQSGS) are compositionally biased toward low complexity. The span at 1140–1150 (SAKSSHCSSGY) shows a compositional bias: polar residues. Residues 1151–1169 (QSISTNPSPSQSSSPVESQ) show a composition bias toward low complexity. Residues Ser-1158 and Ser-1164 each carry the phosphoserine modification. A compositionally biased stretch (polar residues) spans 1186–1206 (PSYQLQPQTGSSRSSAQSNTH). Composition is skewed to low complexity over residues 1207–1216 (QQQQQQQQQQ), 1285–1299 (SGGSSSSTSASASTS), and 1351–1362 (HQQQQNPMQQQQ). Over residues 1363–1372 (QRERDQEHKQ) the composition is skewed to basic and acidic residues. Residues 1374–1388 (AGSVAGSVGSATSAA) are compositionally biased toward low complexity. Residues 1396 to 1415 (SARTLSDSSTDTEGHCNQLQ) are compositionally biased toward polar residues. Phosphoserine occurs at positions 1401 and 1403. Residues 1427-1438 (GGSGGGGAGSEQ) show a composition bias toward gly residues. Over residues 1563–1580 (TQQQQQQHQAPPKTQKPQ) the composition is skewed to low complexity.

The protein localises to the cytoplasm. It localises to the cell membrane. It is found in the apical cell membrane. In terms of biological role, GTPase-activating protein, which acts as a negative regulator for some members of the Ras family. Probably decreases their signaling activity by stimulating their intrinsic GTPase activity, thereby lowering the levels of the GTP-bound active form. Functions with DE-cadherin (shg) to promote embryonic border cell (BC) migration and adhesion by regulating the distribution of actin protrusions in BCs. Promotes shg-mediated adhesion at the BC interfaces and likely maintains BC cluster adhesion during BC detachment from the follicular epithelium and subsequent BC migration. Also required for restricting the development of actin-rich protrusions to the front of migrating BC clusters thus ensuring unidirectional BC migration. Possibly functions by suppressing Rac1 signaling in non-leading BCs, thus limiting its activity to leading BCs where it initiates localized actin cytoskeleton remodeling to produce the polarized protrusions. The polypeptide is Ras GTPase-activating protein raskol (Drosophila melanogaster (Fruit fly)).